The sequence spans 194 residues: FMN-dependent NADH:quinone oxidoreductase (194 aa).

Residues S9, 15–17, and 85–88 contribute to the FMN site; these read SIS and MYNF.

The protein belongs to the azoreductase type 1 family. As to quaternary structure, homodimer. FMN serves as cofactor.

It catalyses the reaction 2 a quinone + NADH + H(+) = 2 a 1,4-benzosemiquinone + NAD(+). It carries out the reaction N,N-dimethyl-1,4-phenylenediamine + anthranilate + 2 NAD(+) = 2-(4-dimethylaminophenyl)diazenylbenzoate + 2 NADH + 2 H(+). In terms of biological role, quinone reductase that provides resistance to thiol-specific stress caused by electrophilic quinones. Functionally, also exhibits azoreductase activity. Catalyzes the reductive cleavage of the azo bond in aromatic azo compounds to the corresponding amines. This Xanthomonas oryzae pv. oryzae (strain KACC10331 / KXO85) protein is FMN-dependent NADH:quinone oxidoreductase.